The following is a 177-amino-acid chain: Large ribosomal subunit protein uL16 (177 aa).

The protein belongs to the universal ribosomal protein uL16 family. In terms of assembly, part of the 50S ribosomal subunit. Weakly binds 5S rRNA. Probably binds the A and P site tRNAs.

Its function is as follows. This is 1 of 5 proteins that mediate the attachment of the 5S rRNA onto the large ribosomal subunit, stabilizing the orientation of adjacent RNA domains. Modeling places the A and P site tRNAs in close proximity to this protein. The protein is Large ribosomal subunit protein uL16 of Haloarcula marismortui (strain ATCC 43049 / DSM 3752 / JCM 8966 / VKM B-1809) (Halobacterium marismortui).